The sequence spans 155 residues: Nodulin-related protein 2 (155 aa).

The residue at position 1 (Met1) is an N-acetylmethionine. Disordered stretches follow at residues 1-37 and 85-155; these read MNFISDQVKKLSSSTPEEPDHNKPVEGTETATRPATN and DEKS…GFLK. The span at 95–106 shows a compositional bias: basic and acidic residues; sequence DKAEKYLNDYES. A compositionally biased stretch (low complexity) spans 120–130; that stretch reads SQAEPASQPEP.

In terms of assembly, interacts with DEK3.

Functionally, may be a negative regulator of the ABA signaling/synthesis pathway. In Arabidopsis thaliana (Mouse-ear cress), this protein is Nodulin-related protein 2.